The sequence spans 97 residues: Co-chaperonin GroES (97 aa).

Belongs to the GroES chaperonin family. In terms of assembly, heptamer of 7 subunits arranged in a ring. Interacts with the chaperonin GroEL.

The protein resides in the cytoplasm. Together with the chaperonin GroEL, plays an essential role in assisting protein folding. The GroEL-GroES system forms a nano-cage that allows encapsulation of the non-native substrate proteins and provides a physical environment optimized to promote and accelerate protein folding. GroES binds to the apical surface of the GroEL ring, thereby capping the opening of the GroEL channel. This Blochmanniella pennsylvanica (strain BPEN) protein is Co-chaperonin GroES.